A 628-amino-acid polypeptide reads, in one-letter code: ATP-dependent RNA helicase mrh4, mitochondrial (628 aa).

Residues 1-40 (MSLAVRPPVCLLCRSGAPTLLPSSVSQVARSMATARLRRK) constitute a mitochondrion transit peptide. The segment at 51–109 (AKSSINQKRSGKAKFGPWSGMNQTEAHIRGEPRSRSQAALRRSGEKAADTPRKSDSPLY) is disordered. Basic and acidic residues predominate over residues 92 to 105 (RSGEKAADTPRKSD). The Q motif motif lies at 137 to 170 (TSFDHFPLLPVVRHSIFSQALPGLVDVTPTPIQR). In terms of domain architecture, Helicase ATP-binding spans 190–402 (EDGDPQYDQY…RKRYPDIKRL (213 aa)). 203-210 (AETGSGKT) contributes to the ATP binding site. The segment covering 228–253 (DKENERKEEERKAKEKEERLKNRAFD) has biased composition (basic and acidic residues). Residues 228-260 (DKENERKEEERKAKEKEERLKNRAFDLEPEEPP) are disordered. The short motif at 349 to 352 (DEAD) is the DEAD box element. Residues 456-628 (YVGPNIKKIL…EGMFRGQALI (173 aa)) enclose the Helicase C-terminal domain.

This sequence belongs to the DEAD box helicase family. MRH4 subfamily.

The protein resides in the mitochondrion. The enzyme catalyses ATP + H2O = ADP + phosphate + H(+). In terms of biological role, ATP-binding RNA helicase involved in mitochondrial RNA metabolism. Required for maintenance of mitochondrial DNA. This chain is ATP-dependent RNA helicase mrh4, mitochondrial (mrh4), found in Aspergillus oryzae (strain ATCC 42149 / RIB 40) (Yellow koji mold).